We begin with the raw amino-acid sequence, 430 residues long: ATP-dependent RNA helicase cgh-1 (430 aa).

The short motif at 43 to 71 is the Q motif element; it reads VEFEDFCLGRDLLMGIFEKGWEKPSPIQE. The 171-residue stretch at 74-244 folds into the Helicase ATP-binding domain; the sequence is IGVALTGQDI…QKHMHKPYEI (171 aa). Position 87-94 (87-94) interacts with ATP; the sequence is AKNGTGKT. The short motif at 192 to 195 is the DEAD box element; the sequence is DEAD. The region spanning 254–414 is the Helicase C-terminal domain; the sequence is GVTQYYAFVQ…PIPKTVDPKL (161 aa).

This sequence belongs to the DEAD box helicase family. DDX6/DHH1 subfamily. Interacts with car-1 in a germline ribonucleoprotein complex. Interacts with ifet-1. Interacts with oma-1, which is a component of a ribonucleoprotein complex, in an RNA-dependent manner. In terms of tissue distribution, expression is restricted to two germline precursors Z2 and Z3 in L1 stage hermaphrodites, and is detectable specifically in the gonad at low levels into the L3 stage. Expression is significantly higher during the early L4 stage. In adults, expression remains gonad-specific and was not apparent in the somatically derived uterus. Expressed in germ granules (P granules); when associated with pgl-1.

The protein localises to the cytoplasm. It catalyses the reaction ATP + H2O = ADP + phosphate + H(+). Probable RNA helicase required for oocyte and sperm function. Also required to prevent the physiological germline apoptosis mechanism killing essentially all developing oocytes. The chain is ATP-dependent RNA helicase cgh-1 (cgh-1) from Caenorhabditis elegans.